The primary structure comprises 227 residues: MLLTLPDILSPQDLQAARQLLIDAPWADGRDSAGAQARQVKNNAQLPHDCEAARAIGTMVVGGLERSALFLTAALPKKIFTPRINRYSGAANHYGNHVDSAIRTMAGSGQRVRTDVSCTVFLSEPDDYEGGELTIADTYGEQRIKLPAGHAVLYPGTSLHQVQPVTRGQRLACFFWVESLVRGNEQRRLLFDMDMALMQLRQEHGESQATVALTGAYHNLLRMWADT.

A Fe2OG dioxygenase domain is found at 78 to 179 (KIFTPRINRY…RLACFFWVES (102 aa)). Fe cation contacts are provided by H97, D99, and H160. R170 is a 2-oxoglutarate binding site.

The cofactor is Fe(2+). L-ascorbate serves as cofactor.

This chain is PKHD-type hydroxylase Bpro_3048, found in Polaromonas sp. (strain JS666 / ATCC BAA-500).